Reading from the N-terminus, the 366-residue chain is Succinyl-diaminopimelate desuccinylase (366 aa).

Histidine 66 is a Zn(2+) binding site. Aspartate 68 is an active-site residue. Aspartate 97 is a binding site for Zn(2+). The active-site Proton acceptor is the glutamate 127. Glutamate 128, glutamate 156, and histidine 341 together coordinate Zn(2+).

It belongs to the peptidase M20A family. DapE subfamily. As to quaternary structure, homodimer. Zn(2+) serves as cofactor. The cofactor is Co(2+).

It carries out the reaction N-succinyl-(2S,6S)-2,6-diaminopimelate + H2O = (2S,6S)-2,6-diaminopimelate + succinate. It functions in the pathway amino-acid biosynthesis; L-lysine biosynthesis via DAP pathway; LL-2,6-diaminopimelate from (S)-tetrahydrodipicolinate (succinylase route): step 3/3. Functionally, catalyzes the hydrolysis of N-succinyl-L,L-diaminopimelic acid (SDAP), forming succinate and LL-2,6-diaminopimelate (DAP), an intermediate involved in the bacterial biosynthesis of lysine and meso-diaminopimelic acid, an essential component of bacterial cell walls. The polypeptide is Succinyl-diaminopimelate desuccinylase (Aliarcobacter butzleri (strain RM4018) (Arcobacter butzleri)).